The chain runs to 155 residues: uncharacterized protein (155 aa).

An N-acetyltransferase domain is found at 7 to 154; that stretch reads LQINYKTLEE…VWLPESVELQ (148 aa).

This is an uncharacterized protein from Brevibacillus brevis (strain 47 / JCM 6285 / NBRC 100599).